Reading from the N-terminus, the 219-residue chain is Ribose-5-phosphate isomerase A (219 aa).

Residues T28 to T31, D81 to D84, and K94 to G97 each bind substrate. E103 acts as the Proton acceptor in catalysis. K121 contributes to the substrate binding site.

The protein belongs to the ribose 5-phosphate isomerase family. As to quaternary structure, homodimer.

The enzyme catalyses aldehydo-D-ribose 5-phosphate = D-ribulose 5-phosphate. It participates in carbohydrate degradation; pentose phosphate pathway; D-ribose 5-phosphate from D-ribulose 5-phosphate (non-oxidative stage): step 1/1. In terms of biological role, catalyzes the reversible conversion of ribose-5-phosphate to ribulose 5-phosphate. The chain is Ribose-5-phosphate isomerase A from Shewanella frigidimarina (strain NCIMB 400).